Here is a 477-residue protein sequence, read N- to C-terminus: Probable cytosolic Fe-S cluster assembly factor GM20417 (477 aa).

Cysteine 23, cysteine 68, cysteine 71, cysteine 74, cysteine 187, cysteine 243, cysteine 395, and cysteine 399 together coordinate [4Fe-4S] cluster.

The protein belongs to the NARF family.

Functionally, component of the cytosolic iron-sulfur (Fe/S) protein assembly machinery. Required for maturation of extramitochondrial Fe/S proteins. The protein is Probable cytosolic Fe-S cluster assembly factor GM20417 of Drosophila sechellia (Fruit fly).